Consider the following 408-residue polypeptide: Arginine biosynthesis bifunctional protein ArgJ (408 aa).

The substrate site is built by threonine 156, lysine 182, threonine 193, glutamate 279, asparagine 403, and threonine 408. Catalysis depends on threonine 193, which acts as the Nucleophile.

Belongs to the ArgJ family. Heterotetramer of two alpha and two beta chains.

It is found in the cytoplasm. It catalyses the reaction N(2)-acetyl-L-ornithine + L-glutamate = N-acetyl-L-glutamate + L-ornithine. The enzyme catalyses L-glutamate + acetyl-CoA = N-acetyl-L-glutamate + CoA + H(+). It participates in amino-acid biosynthesis; L-arginine biosynthesis; L-ornithine and N-acetyl-L-glutamate from L-glutamate and N(2)-acetyl-L-ornithine (cyclic): step 1/1. It functions in the pathway amino-acid biosynthesis; L-arginine biosynthesis; N(2)-acetyl-L-ornithine from L-glutamate: step 1/4. Functionally, catalyzes two activities which are involved in the cyclic version of arginine biosynthesis: the synthesis of N-acetylglutamate from glutamate and acetyl-CoA as the acetyl donor, and of ornithine by transacetylation between N(2)-acetylornithine and glutamate. This chain is Arginine biosynthesis bifunctional protein ArgJ, found in Methylococcus capsulatus (strain ATCC 33009 / NCIMB 11132 / Bath).